Reading from the N-terminus, the 178-residue chain is E1B protein, small T-antigen (178 aa).

The protein belongs to the adenoviridae E1B 19 kDa protein family.

The protein resides in the host cell membrane. It is found in the host nucleus envelope. It localises to the host nucleus lamina. Putative adenovirus Bcl-2 homolog that inhibits apoptosis induced by TNF or FAS pathways, as well as p53-mediated apoptosis. Without E1B 19K function, virus production is compromised because of premature death of host cell. Interacts with Bax protein in cell lysates. The polypeptide is E1B protein, small T-antigen (Human adenovirus B serotype 7 (HAdV-7)).